Consider the following 255-residue polypeptide: Indole-3-glycerol phosphate synthase (255 aa).

It belongs to the TrpC family.

It catalyses the reaction 1-(2-carboxyphenylamino)-1-deoxy-D-ribulose 5-phosphate + H(+) = (1S,2R)-1-C-(indol-3-yl)glycerol 3-phosphate + CO2 + H2O. Its pathway is amino-acid biosynthesis; L-tryptophan biosynthesis; L-tryptophan from chorismate: step 4/5. This chain is Indole-3-glycerol phosphate synthase, found in Streptococcus thermophilus (strain ATCC BAA-491 / LMD-9).